The primary structure comprises 474 residues: Trehalose-6-phosphate synthase (474 aa).

Arginine 10 provides a ligand contact to D-glucose 6-phosphate. 22-23 (GG) is a UDP-alpha-D-glucose binding site. D-glucose 6-phosphate contacts are provided by tyrosine 77 and aspartate 131. Residues arginine 263 and lysine 268 each coordinate UDP-alpha-D-glucose. Arginine 301 contributes to the D-glucose 6-phosphate binding site. UDP-alpha-D-glucose-binding positions include phenylalanine 340 and 366–370 (LVAKE).

The protein belongs to the glycosyltransferase 20 family. Homotetramer.

It carries out the reaction D-glucose 6-phosphate + UDP-alpha-D-glucose = alpha,alpha-trehalose 6-phosphate + UDP + H(+). Its pathway is glycan biosynthesis; trehalose biosynthesis. Probably involved in the osmoprotection via the biosynthesis of trehalose. Catalyzes the transfer of glucose from UDP-alpha-D-glucose (UDP-Glc) to D-glucose 6-phosphate (Glc-6-P) to form trehalose-6-phosphate. Acts with retention of the anomeric configuration of the UDP-sugar donor. The protein is Trehalose-6-phosphate synthase of Shigella dysenteriae serotype 1 (strain Sd197).